Consider the following 135-residue polypeptide: Small ribosomal subunit protein bS16m/bS16c (135 aa).

A chloroplast and mitochondrion-targeting transit peptide spans 1–7 (MVVRIRL). The disordered stretch occupies residues 87-135 (PMVAMGRKGGARDTRPVDPMTGRYVDAENKTVNANDNQPKEEDTEAKSA). The segment covering 124-135 (QPKEEDTEAKSA) has biased composition (basic and acidic residues).

This sequence belongs to the bacterial ribosomal protein bS16 family. As to quaternary structure, component of the mitochondrial ribosome small subunit. As to expression, expressed at low levels in flowers, and, to a lower extent, in leaves, stems and roots.

The protein resides in the mitochondrion. Its subcellular location is the plastid. The protein localises to the chloroplast. The polypeptide is Small ribosomal subunit protein bS16m/bS16c (Arabidopsis thaliana (Mouse-ear cress)).